Reading from the N-terminus, the 1263-residue chain is Topoisomerase 1-associated factor 1 (1263 aa).

Disordered stretches follow at residues 1042–1098 (ERQL…DDSQ) and 1178–1263 (VEES…DEEE). Over residues 1060 to 1071 (TKGKARKKSKEK) the composition is skewed to basic residues. Acidic residues predominate over residues 1179-1189 (EESDNDDEVEE). Residues 1211-1226 (VDTQQDLSDNTSNTSD) show a composition bias toward polar residues.

The protein belongs to the timeless family. As to quaternary structure, component of the fork protection complex (FPC) consisting of TOF1 and CSM3.

The protein localises to the nucleus. Forms a fork protection complex (FPC) with CSM3 and which is required for chromosome segregation during meiosis and DNA damage repair. FPC coordinates leading and lagging strand synthesis and moves with the replication fork. FPC stabilizes replication forks in a configuration that is recognized by replication checkpoint sensors. This is Topoisomerase 1-associated factor 1 (YBL053) from Candida albicans (strain SC5314 / ATCC MYA-2876) (Yeast).